A 173-amino-acid chain; its full sequence is MDVTIQHPWFKRPLGPFYPSRLFDQFFGEGLFEYDLLPFLSSTISPYYRQSLFRTVLDSGVSEVRSDRDKFVIFLDVKHFSPEDLTVKVQEDFVEIHGKHNERQDDHGYISREFHRRYRLPSNVDQSALSCSLSADGMLTFSGPKVQSGLDAGHSERAIPVSREEKPSSAPSS.

The residue at position 1 (Met-1) is an N-acetylmethionine. The segment at 1 to 63 (MDVTIQHPWF…RTVLDSGVSE (63 aa)) is required for complex formation with BFSP1 and BFSP2. Gln-6 carries the deamidated glutamine; partial modification. Ser-45 carries the post-translational modification Phosphoserine. At Gln-50 the chain carries Deamidated glutamine; partial. Positions 52 to 162 (LFRTVLDSGV…GHSERAIPVS (111 aa)) constitute a sHSP domain. Lys-70 carries the N6-acetyllysine modification. At Gln-90 the chain carries Deamidated glutamine; partial. Position 99 is an N6-acetyllysine (Lys-99). Residue His-100 coordinates Zn(2+). Position 101 is a deamidated asparagine; partial (Asn-101). 2 residues coordinate Zn(2+): Glu-102 and His-107. Phosphoserine is present on Ser-122. Asn-123 carries the deamidated asparagine; partial modification. Positions 145–173 (KVQSGLDAGHSERAIPVSREEKPSSAPSS) are disordered. Gln-147 bears the Deamidated glutamine; partial mark. A compositionally biased stretch (basic and acidic residues) spans 153-167 (GHSERAIPVSREEKP). His-154 contributes to the Zn(2+) binding site. A glycan (O-linked (GlcNAc) serine) is linked at Ser-162.

It belongs to the small heat shock protein (HSP20) family. In terms of assembly, heteromer composed of three CRYAA and one CRYAB subunits. Inter-subunit bridging via zinc ions enhances stability, which is crucial as there is no protein turn over in the lens. Can also form homodimers and homotetramers (dimers of dimers) which serve as the building blocks of homooligomers. Within homooligomers, the zinc-binding motif is created from residues of 3 different molecules. His-100 and Glu-102 from one molecule are ligands of the zinc ion, and His-107 and His-154 residues from additional molecules complete the site with tetrahedral coordination geometry. Part of a complex required for lens intermediate filament formation composed of BFSP1, BFSP2 and CRYAA. Acetylation at Lys-70 may increase chaperone activity. In terms of processing, undergoes age-dependent proteolytical cleavage at the C-terminus.

It localises to the cytoplasm. The protein resides in the nucleus. Its function is as follows. Contributes to the transparency and refractive index of the lens. Acts as a chaperone, preventing aggregation of various proteins under a wide range of stress conditions. Required for the correct formation of lens intermediate filaments as part of a complex composed of BFSP1, BFSP2 and CRYAA. The protein is Alpha-crystallin A chain (CRYAA) of Eulemur fulvus fulvus (Brown lemur).